A 170-amino-acid polypeptide reads, in one-letter code: Cytochrome P450 monooxygenase oryQ (170 aa).

Residue Cys85 participates in heme binding.

The protein belongs to the cytochrome P450 family. Heme serves as cofactor.

It participates in secondary metabolite biosynthesis. Cytochrome P450 monooxygenase; part of the gene cluster that mediates the biosynthesis of oryzines, natural products with an unusual maleidride backbone. The two subunits of the fungal fatty acid synthase oryfasA and oryfasB probably form octenoic acid. This fatty acid is most likely activated by the acyl-CoA ligase oryP to give octenyl-CoA before the citrate synthase-like protein oryE catalyzes condensation with oxaloacetate to form tricarboxylic acid. The next steps of the pathways are conjectural, but a favorite possible route has been proposed, beginning with decarboxylation and concomitant dehydration by the decarboxylase oryM, followed by tautomerization, which may lead to the production of a diene intermediate. Reduction of this diene intermediate could give the known metabolite piliformic acid. On the pathway to oryzine B and oryzine A, however, hydroxylation of the diene by the alpha-ketoglutarate-dependent dioxygenase oryG and lactonisation by the lactonohydrolases oryH or oryL could give oryzine B directly. Finally, enoyl reduction by the dehydrogenase oryD would then convert oryzine B into oryzine A. The chain is Cytochrome P450 monooxygenase oryQ from Aspergillus oryzae (strain ATCC 42149 / RIB 40) (Yellow koji mold).